The sequence spans 527 residues: Beta-glucosidase 19 (527 aa).

An N-terminal signal peptide occupies residues 1-21; that stretch reads MKIPLLGLLLLISLVGSPTRA. Residues Gln52 and His155 each contribute to the a beta-D-glucoside site. Asn183 carries an N-linked (GlcNAc...) asparagine glycan. Residue 200–201 participates in a beta-D-glucoside binding; it reads NE. Catalysis depends on Glu201, which acts as the Proton donor. A disulfide bond links Cys220 and Cys231. Residues Tyr345 and Glu418 each coordinate a beta-D-glucoside. Glu418 (nucleophile) is an active-site residue. Asn462 is a glycosylation site (N-linked (GlcNAc...) asparagine). Residues Trp469, 476–477, and Phe485 each bind a beta-D-glucoside; that span reads EW. Residue Asn495 is glycosylated (N-linked (GlcNAc...) asparagine). The short motif at 524–527 is the Prevents secretion from ER element; sequence HEEL.

Belongs to the glycosyl hydrolase 1 family.

The protein localises to the endoplasmic reticulum lumen. It catalyses the reaction Hydrolysis of terminal, non-reducing beta-D-glucosyl residues with release of beta-D-glucose.. The chain is Beta-glucosidase 19 from Arabidopsis thaliana (Mouse-ear cress).